We begin with the raw amino-acid sequence, 329 residues long: Chlorophyllase-1, chloroplastic (329 aa).

The N-terminal 21 residues, 1-21 (MAAMVDSKPAASVQGTPLLAT), are a transit peptide targeting the chloroplast. Positions 145-149 (GHSRG) match the GXSXG motif. Residue Ser-147 is the Nucleophile of the active site. Catalysis depends on charge relay system residues Asp-169 and His-242.

The protein belongs to the AB hydrolase superfamily. Lipase family.

It localises to the plastid. The protein resides in the chloroplast. It carries out the reaction a chlorophyll + H2O = a chlorophyllide + phytol + H(+). It participates in porphyrin-containing compound metabolism; chlorophyll degradation. In terms of biological role, catalyzes the hydrolysis of ester bond in chlorophyll to yield chlorophyllide and phytol. This is Chlorophyllase-1, chloroplastic from Citrus unshiu (Satsuma mandarin).